A 227-amino-acid chain; its full sequence is E3 ubiquitin-protein ligase ZNRF1 (227 aa).

The segment at 1-42 (MGGKQSTAARSRGPFPGVSTDDSAVPPPGGAPHFGHYRTGGG) is disordered. Residue Gly-2 is the site of N-myristoyl glycine attachment. The segment at 2 to 10 (GGKQSTAAR) is required for endosomal and lysosomal localization and myristoylation. Phosphoserine occurs at positions 50, 52, and 53. The tract at residues 65-105 (GGVPFSLYTPASRGTGDSERAPGGGGSTSDSTYAHGNGYQE) is disordered. Tyr-103 carries the phosphotyrosine modification. At Ser-123 the chain carries Phosphoserine. Residues 184–225 (CVICLEELLQGDTIARLPCLCIYHKSCIDSWFEVNRSCPEHP) form an RING-type; atypical zinc finger.

As to quaternary structure, interacts with AKT1, GLUL and TUBB2A. Interacts with ZNRF2. Interacts (via its RING domain) with UBE2N. Interacts (when phosphorylated) with YWHAE. N-myristoylation targets ZNRF1 to intracellular membranes. In terms of processing, phosphorylated by SRC at Tyr-103; leading to 'Lys-63'-linked ubiquitination of TLR3, lysosomal trafficking and degradation.

It localises to the endosome. Its subcellular location is the lysosome. The protein localises to the membrane. The protein resides in the cytoplasmic vesicle. It is found in the secretory vesicle. It localises to the synaptic vesicle membrane. It catalyses the reaction S-ubiquitinyl-[E2 ubiquitin-conjugating enzyme]-L-cysteine + [acceptor protein]-L-lysine = [E2 ubiquitin-conjugating enzyme]-L-cysteine + N(6)-ubiquitinyl-[acceptor protein]-L-lysine.. It participates in protein modification; protein ubiquitination. Functionally, E3 ubiquitin-protein ligase that plays a role in different processes including cell differentiation, receptor recycling or regulation of inflammation. Mediates the ubiquitination of AKT1 and GLUL, thereby playing a role in neuron cells differentiation. Plays a role in the establishment and maintenance of neuronal transmission and plasticity. Regulates Schwann cells differentiation by mediating ubiquitination of GLUL. Promotes neurodegeneration by mediating 'Lys-48'-linked polyubiquitination and subsequent degradation of AKT1 in axons: degradation of AKT1 prevents AKT1-mediated phosphorylation of GSK3B, leading to GSK3B activation and phosphorylation of DPYSL2/CRMP2 followed by destabilization of microtubule assembly in axons. Ubiquitinates the Na(+)/K(+) ATPase alpha-1 subunit/ATP1A1 and thereby influences its endocytosis and/or degradation. Controls ligand-induced EGFR signaling via mediating receptor ubiquitination and recruitment of the ESCRT machinery. Acts as a negative feedback mechanism controlling TLR3 trafficking by mediating TLR3 'Lys-63'-linked polyubiquitination to reduce type I IFN production. Modulates inflammation by promoting caveolin-1/CAV1 ubiquitination and degradation to regulate TLR4-activated immune response. This is E3 ubiquitin-protein ligase ZNRF1 (Znrf1) from Mus musculus (Mouse).